We begin with the raw amino-acid sequence, 176 residues long: 3-hydroxyanthranilate 3,4-dioxygenase (176 aa).

R44 is an O2 binding site. Fe cation contacts are provided by H48, E54, and H92. Substrate is bound at residue E54. Substrate contacts are provided by R96 and E106. Fe cation is bound by residues C121, C124, C158, and C161.

It belongs to the 3-HAO family. Homodimer. It depends on Fe(2+) as a cofactor.

It catalyses the reaction 3-hydroxyanthranilate + O2 = (2Z,4Z)-2-amino-3-carboxymuconate 6-semialdehyde. It participates in cofactor biosynthesis; NAD(+) biosynthesis; quinolinate from L-kynurenine: step 3/3. In terms of biological role, catalyzes the oxidative ring opening of 3-hydroxyanthranilate to 2-amino-3-carboxymuconate semialdehyde, which spontaneously cyclizes to quinolinate. The polypeptide is 3-hydroxyanthranilate 3,4-dioxygenase (Xanthomonas campestris pv. campestris (strain B100)).